Here is a 292-residue protein sequence, read N- to C-terminus: 5,10-methylenetetrahydrofolate reductase (292 aa).

E28 (proton donor/acceptor) is an active-site residue. T59 is a binding site for NADH. Y60, A62, H88, R118, G119, D120, A132, Y152, H156, D165, N168, K171, and K172 together coordinate FAD. Residue D120 coordinates (6S)-5-methyl-5,6,7,8-tetrahydrofolate. Q183 contributes to the NADH binding site. The (6S)-5-methyl-5,6,7,8-tetrahydrofolate site is built by Q183, Q219, and K279.

The protein belongs to the methylenetetrahydrofolate reductase family. It depends on FAD as a cofactor.

The catalysed reaction is (6S)-5-methyl-5,6,7,8-tetrahydrofolate + NAD(+) = (6R)-5,10-methylene-5,6,7,8-tetrahydrofolate + NADH + H(+). The protein operates within one-carbon metabolism; tetrahydrofolate interconversion. It participates in amino-acid biosynthesis; L-methionine biosynthesis via de novo pathway. Functionally, catalyzes the NADH-dependent reduction of 5,10-methylenetetrahydrofolate to 5-methyltetrahydrofolate. Is required to provide the methyl group necessary for methionine synthetase to convert homocysteine to methionine; the methyl group is given by 5-methyltetrahydrofolate. This chain is 5,10-methylenetetrahydrofolate reductase (metF), found in Buchnera aphidicola subsp. Schizaphis graminum (strain Sg).